Consider the following 615-residue polypeptide: AP-1-like transcription factor yap1 (615 aa).

Over residues 27–50 the composition is skewed to polar residues; sequence SSNNPTQKQQTVTHNSEANQNLNH. Disordered regions lie at residues 27–84 and 99–180; these read SSNN…EDSP and NESL…RKEK. The Bipartite nuclear localization signal motif lies at 35–42; sequence QQTVTHNS. Low complexity predominate over residues 52 to 67; the sequence is PGHASSGSFSVSPPSG. The short motif at 68–75 is the Bipartite nuclear localization signal element; it reads LDGSVNQS. Positions 118 to 147 are enriched in basic and acidic residues; that stretch reads PGDKRKDIDGQVNDKEDSGKKRRESDEKAA. The region spanning 157 to 220 is the bZIP domain; that stretch reads SEPTSKRKAQ…ERLQLELKEY (64 aa). A basic motif region spans residues 162–183; it reads KRKAQNRAAQRAFRERKEKHLK. Positions 185-192 are leucine-zipper; sequence LEAKVEEL. Positions 214–364 are transcription activation 1; that stretch reads QLELKEYRKR…RGYQVNSSYS (151 aa). Polar residues predominate over residues 270–294; sequence LFTNTQTSKSNQNKAKDNPTATPRS. A disordered region spans residues 270–416; it reads LFTNTQTSKS…AVKATESSTP (147 aa). The segment at 289–301 is n-CRD; it reads TATPRSEAQVPGV. Positions 310-321 are enriched in low complexity; the sequence is SSPNGLSNGPSP. Composition is skewed to polar residues over residues 322 to 344 and 358 to 369; these read AKSTPSGQTPNSQTSTRPGSGTL and QVNSSYSASTKQ. Low complexity predominate over residues 372–394; that stretch reads HDTPSSDSPSSSSDSHQSQLLSS. The segment at 409 to 508 is transcription activation 2; the sequence is KATESSTPHA…SQDFGTFFDD (100 aa). Cystine bridges form between Cys562–Cys586, Cys562–Cys595, and Cys586–Cys595. Positions 562–595 are c-CRD; it reads CNKIWDRLQSMEKFRNGEIDVDNLCSELRTKARC. The Nuclear export signal signature appears at 580 to 587; sequence IDVDNLCS.

This sequence belongs to the bZIP family. YAP subfamily. Depending on the oxidative stress inducing agent, yap1 can undergo two distinct conformational changes, both involving disulfide bond formation, and both masking the nuclear export signal, thus abolishing nuclear export.

The protein localises to the nucleus. It is found in the cytoplasm. In terms of biological role, transcription activator involved in oxidative stress response and redox homeostasis. Regulates the transcription of genes encoding antioxidant enzymes and components of the cellular thiol-reducing pathways, including thioredoxin peroxidase (aspF3), cytochrome peroxidase, and the protein AFUA_3G00730, which appears to belong to the glutathione S-transferase family. Proteins of the protein degradation pathway are also regulated by yap1, as well the p-nitroreductase family protein AFUA_5G09910. May be involved in antifungal resistance to voriconazole. The protein is AP-1-like transcription factor yap1 of Aspergillus fumigatus (strain ATCC MYA-4609 / CBS 101355 / FGSC A1100 / Af293) (Neosartorya fumigata).